Here is a 444-residue protein sequence, read N- to C-terminus: Elongation factor 1-alpha (444 aa).

The 224-residue stretch at 15–238 (KPHINLAVVG…DSFQPPQRPV (224 aa)) folds into the tr-type G domain. Positions 24–31 (GHVDNGKS) are G1. 24 to 31 (GHVDNGKS) is a GTP binding site. S31 provides a ligand contact to Mg(2+). Positions 80–84 (GVTIE) are G2. Positions 101–104 (DLPG) are G3. Residues 101-105 (DLPGH) and 163-166 (NKMD) each bind GTP. The segment at 163–166 (NKMD) is G4. The interval 202–204 (SAI) is G5.

This sequence belongs to the TRAFAC class translation factor GTPase superfamily. Classic translation factor GTPase family. EF-Tu/EF-1A subfamily.

It is found in the cytoplasm. The enzyme catalyses GTP + H2O = GDP + phosphate + H(+). In terms of biological role, GTP hydrolase that promotes the GTP-dependent binding of aminoacyl-tRNA to the A-site of ribosomes during protein biosynthesis. This Pyrobaculum aerophilum (strain ATCC 51768 / DSM 7523 / JCM 9630 / CIP 104966 / NBRC 100827 / IM2) protein is Elongation factor 1-alpha.